A 223-amino-acid chain; its full sequence is Neurotrophic factor BDNF precursor form (223 aa).

The first 5 residues, 1–5 (SCMKA), serve as a signal peptide directing secretion. The propeptide occupies 6–114 (APMKEVSIRG…AANMSMRVRR (109 aa)). Asn107 carries N-linked (GlcNAc...) asparagine glycosylation. Cystine bridges form between Cys127–Cys194 and Cys172–Cys223.

The protein belongs to the NGF-beta family.

The protein resides in the secreted. In terms of biological role, promotes the survival of neuronal populations that are all located either in the central nervous system or directly connected to it. The polypeptide is Neurotrophic factor BDNF precursor form (BDNF) (Calabaria reinhardtii (Calabar boa)).